The sequence spans 438 residues: Na(+)/H(+) antiporter NhaA (438 aa).

Helical transmembrane passes span 23 to 43 (FGGI…NSFL), 62 to 82 (FFIG…LFFL), 104 to 124 (SFPV…YFFL), 133 to 153 (GFGI…MLLG), 162 to 182 (VFLI…IALF), 185 to 205 (TNLK…LAIL), 212 to 232 (SLIP…QSGI), 302 to 322 (FLAP…NAGV), 337 to 357 (LGVI…ITFI), 372 to 392 (WWHI…SMFI), and 410 to 430 (IAIL…LFAL).

This sequence belongs to the NhaA Na(+)/H(+) (TC 2.A.33) antiporter family.

It is found in the cell inner membrane. It catalyses the reaction Na(+)(in) + 2 H(+)(out) = Na(+)(out) + 2 H(+)(in). Its function is as follows. Na(+)/H(+) antiporter that extrudes sodium in exchange for external protons. The chain is Na(+)/H(+) antiporter NhaA from Helicobacter pylori (strain J99 / ATCC 700824) (Campylobacter pylori J99).